We begin with the raw amino-acid sequence, 280 residues long: 2-dehydro-3-deoxyphosphooctonate aldolase (280 aa).

It belongs to the KdsA family.

It localises to the cytoplasm. It carries out the reaction D-arabinose 5-phosphate + phosphoenolpyruvate + H2O = 3-deoxy-alpha-D-manno-2-octulosonate-8-phosphate + phosphate. Its pathway is carbohydrate biosynthesis; 3-deoxy-D-manno-octulosonate biosynthesis; 3-deoxy-D-manno-octulosonate from D-ribulose 5-phosphate: step 2/3. The protein operates within bacterial outer membrane biogenesis; lipopolysaccharide biosynthesis. The polypeptide is 2-dehydro-3-deoxyphosphooctonate aldolase (Neisseria gonorrhoeae (strain NCCP11945)).